The sequence spans 481 residues: Aspartyl/glutamyl-tRNA(Asn/Gln) amidotransferase subunit B (481 aa).

Belongs to the GatB/GatE family. GatB subfamily. Heterotrimer of A, B and C subunits.

It carries out the reaction L-glutamyl-tRNA(Gln) + L-glutamine + ATP + H2O = L-glutaminyl-tRNA(Gln) + L-glutamate + ADP + phosphate + H(+). The catalysed reaction is L-aspartyl-tRNA(Asn) + L-glutamine + ATP + H2O = L-asparaginyl-tRNA(Asn) + L-glutamate + ADP + phosphate + 2 H(+). Allows the formation of correctly charged Asn-tRNA(Asn) or Gln-tRNA(Gln) through the transamidation of misacylated Asp-tRNA(Asn) or Glu-tRNA(Gln) in organisms which lack either or both of asparaginyl-tRNA or glutaminyl-tRNA synthetases. The reaction takes place in the presence of glutamine and ATP through an activated phospho-Asp-tRNA(Asn) or phospho-Glu-tRNA(Gln). The protein is Aspartyl/glutamyl-tRNA(Asn/Gln) amidotransferase subunit B of Pseudomonas putida (strain ATCC 700007 / DSM 6899 / JCM 31910 / BCRC 17059 / LMG 24140 / F1).